Reading from the N-terminus, the 117-residue chain is Carboxysome shell protein CcmK4 (117 aa).

A BMC domain is found at 5-91; that stretch reads AVGSLETKGF…PHENVECVLP (87 aa).

Belongs to the bacterial microcompartments protein family. CcmK subfamily. Crystallizes as a homohexamer. Interacts stably with CcmK3, forming heterohexamers that can make dodecamers. Heterohexamers have a 1:2 CcmK3:CcmK4 stoichiometry. Upon expression in E.coli forms large aggregates.

The protein localises to the carboxysome. A probably essential, minor shell protein of the carboxysome, a polyhedral inclusion where RuBisCO (ribulose bisphosphate carboxylase, rbcL-rbcS) is sequestered. Hexamers form sheets that form the facets of the polyhedral carboxysome. In PCC 7418 there are several CcmK paralogs with presumably functional differences. This subunit can probably make both homohexamers and heterohexamers with CcmK3. Both hexamers can also make dodecamers, formation depends on buffer conditions. In Halothece sp. (strain PCC 7418) (Synechococcus sp. (strain PCC 7418)), this protein is Carboxysome shell protein CcmK4.